The primary structure comprises 85 residues: uncharacterized protein (85 aa).

The first 35 residues, 1-35 (MIEDPSKKISLWQKWINVDPKKRILFSLGLFALSA), serve as a signal peptide directing secretion.

It is found in the secreted. This is an uncharacterized protein from Dictyostelium discoideum (Social amoeba).